Here is a 438-residue protein sequence, read N- to C-terminus: 3-phosphoshikimate 1-carboxyvinyltransferase (438 aa).

3-phosphoshikimate contacts are provided by K26, S27, and R31. K26 is a binding site for phosphoenolpyruvate. The phosphoenolpyruvate site is built by G99 and R127. Residues S170, S171, Q172, S199, E314, and H343 each coordinate 3-phosphoshikimate. Position 172 (Q172) interacts with phosphoenolpyruvate. The active-site Proton acceptor is the E314. Phosphoenolpyruvate contacts are provided by R347, R388, and K413.

Belongs to the EPSP synthase family. Monomer.

It localises to the cytoplasm. The catalysed reaction is 3-phosphoshikimate + phosphoenolpyruvate = 5-O-(1-carboxyvinyl)-3-phosphoshikimate + phosphate. It functions in the pathway metabolic intermediate biosynthesis; chorismate biosynthesis; chorismate from D-erythrose 4-phosphate and phosphoenolpyruvate: step 6/7. Its function is as follows. Catalyzes the transfer of the enolpyruvyl moiety of phosphoenolpyruvate (PEP) to the 5-hydroxyl of shikimate-3-phosphate (S3P) to produce enolpyruvyl shikimate-3-phosphate and inorganic phosphate. This is 3-phosphoshikimate 1-carboxyvinyltransferase from Mycobacterium sp. (strain MCS).